Here is a 39-residue protein sequence, read N- to C-terminus: Contryphan-Cal2 (39 aa).

An N-terminal signal peptide occupies residues 1–20 (MTRTAVLLLTLLFLVAMAAS). Cysteine 29 and cysteine 35 are oxidised to a cystine.

Expressed by the venom duct.

The protein localises to the secreted. Its function is as follows. Probable neurotoxin. In Californiconus californicus (California cone), this protein is Contryphan-Cal2.